The primary structure comprises 91 residues: Probable Fe(2+)-trafficking protein (91 aa).

It belongs to the Fe(2+)-trafficking protein family.

Functionally, could be a mediator in iron transactions between iron acquisition and iron-requiring processes, such as synthesis and/or repair of Fe-S clusters in biosynthetic enzymes. The sequence is that of Probable Fe(2+)-trafficking protein from Paraburkholderia phymatum (strain DSM 17167 / CIP 108236 / LMG 21445 / STM815) (Burkholderia phymatum).